Reading from the N-terminus, the 428-residue chain is Probable pectin lyase F (428 aa).

An N-terminal signal peptide occupies residues Met1 to Ala20. Cysteines 83 and 107 form a disulfide. Arg257 is an active-site residue. Asn276 carries an N-linked (GlcNAc...) asparagine glycan. Cysteines 324 and 332 form a disulfide. 2 disordered regions span residues Leu337–Asp367 and Gly383–Tyr428. Positions Ala389–Tyr417 are enriched in low complexity. The segment covering Ala418–Tyr428 has biased composition (basic residues).

This sequence belongs to the polysaccharide lyase 1 family.

Its subcellular location is the secreted. It carries out the reaction Eliminative cleavage of (1-&gt;4)-alpha-D-galacturonan methyl ester to give oligosaccharides with 4-deoxy-6-O-methyl-alpha-D-galact-4-enuronosyl groups at their non-reducing ends.. Its function is as follows. Pectinolytic enzymes consist of four classes of enzymes: pectin lyase, polygalacturonase, pectin methylesterase and rhamnogalacturonase. Among pectinolytic enzymes, pectin lyase is the most important in depolymerization of pectin, since it cleaves internal glycosidic bonds of highly methylated pectins. In Aspergillus flavus (strain ATCC 200026 / FGSC A1120 / IAM 13836 / NRRL 3357 / JCM 12722 / SRRC 167), this protein is Probable pectin lyase F (pelF).